Reading from the N-terminus, the 250-residue chain is Bis(5'-nucleosyl)-tetraphosphatase PrpE [asymmetrical] (250 aa).

The protein belongs to the PrpE family. Requires Ni(2+) as cofactor.

The enzyme catalyses P(1),P(4)-bis(5'-guanosyl) tetraphosphate + H2O = GMP + GTP + 2 H(+). Its function is as follows. Asymmetrically hydrolyzes Ap4p to yield AMP and ATP. This chain is Bis(5'-nucleosyl)-tetraphosphatase PrpE [asymmetrical], found in Oceanobacillus iheyensis (strain DSM 14371 / CIP 107618 / JCM 11309 / KCTC 3954 / HTE831).